The sequence spans 64 residues: Cytochrome c oxidase subunit 9, mitochondrial (64 aa).

The Mitochondrial matrix segment spans residues 1–15 (MAATAVRPITGMLRR). A helical membrane pass occupies residues 16 to 36 (GLILDIGIALGVGFVMANGYW). Topologically, residues 37–64 (YGYHMPRTNARDNYYKKLEEERAARMGA) are mitochondrial intermembrane.

Belongs to the fungal cytochrome c oxidase subunit 7a family. As to quaternary structure, component of the cytochrome c oxidase (complex IV, CIV), a multisubunit enzyme composed of 11 subunits. The complex is composed of a catalytic core of 3 subunits Cox1, Cox2 and Cox3, encoded in the mitochondrial DNA, and 8 supernumerary subunits Cox4, Cox5a/Cox5, Cox6, Cox7, Cox8, Cox7a/Cox9, Cox6b/Cox12 and Cox6a/Cox13, which are encoded in the nuclear genome. The complex exists as a monomer or a dimer and forms respiratory supercomplexes (SCs) in the inner mitochondrial membrane with NADH-ubiquinone oxidoreductase (complex I, CI) and ubiquinol-cytochrome c oxidoreductase (cytochrome b-c1 complex, complex III, CIII), resulting in various different assemblies (supercomplexes I(1)IV(1), I(1)III(3)IV(2), III(2)IV(1) and III(2)IV(2) as well as larger supercomplexes of compositions like I(1)III(2)IV(5-6)).

The protein resides in the mitochondrion inner membrane. It participates in energy metabolism; oxidative phosphorylation. Functionally, component of the cytochrome c oxidase, the last enzyme in the mitochondrial electron transport chain which drives oxidative phosphorylation. The respiratory chain contains 3 multisubunit complexes succinate dehydrogenase (complex II, CII), ubiquinol-cytochrome c oxidoreductase (cytochrome b-c1 complex, complex III, CIII) and cytochrome c oxidase (complex IV, CIV), that cooperate to transfer electrons derived from NADH and succinate to molecular oxygen, creating an electrochemical gradient over the inner membrane that drives transmembrane transport and the ATP synthase. Cytochrome c oxidase is the component of the respiratory chain that catalyzes the reduction of oxygen to water. Electrons originating from reduced cytochrome c in the intermembrane space (IMS) are transferred via the dinuclear copper A center (CU(A)) of Cox2 and heme A of Cox1 to the active site in Cox1, a binuclear center (BNC) formed by heme A3 and copper B (CU(B)). The BNC reduces molecular oxygen to 2 water molecules using 4 electrons from cytochrome c in the IMS and 4 protons from the mitochondrial matrix. The chain is Cytochrome c oxidase subunit 9, mitochondrial (cox-17) from Neurospora crassa (strain ATCC 24698 / 74-OR23-1A / CBS 708.71 / DSM 1257 / FGSC 987).